A 729-amino-acid chain; its full sequence is Fatty acid oxidation complex subunit alpha (729 aa).

An enoyl-CoA hydratase/isomerase region spans residues 1–189; that stretch reads MLYQGETLQL…KVGLVDAVVA (189 aa). Residue D296 coordinates substrate. Residues 311–729 are 3-hydroxyacyl-CoA dehydrogenase; that stretch reads EAPKQAAVLG…LSDVSTGQPA (419 aa). Residues M324, D343, 400–402, K407, and S429 contribute to the NAD(+) site; that span reads VVE. H450 functions as the For 3-hydroxyacyl-CoA dehydrogenase activity in the catalytic mechanism. N453 provides a ligand contact to NAD(+). Residues N500 and Y660 each coordinate substrate.

The protein in the N-terminal section; belongs to the enoyl-CoA hydratase/isomerase family. This sequence in the C-terminal section; belongs to the 3-hydroxyacyl-CoA dehydrogenase family. As to quaternary structure, heterotetramer of two alpha chains (FadB) and two beta chains (FadA).

It catalyses the reaction a (3S)-3-hydroxyacyl-CoA + NAD(+) = a 3-oxoacyl-CoA + NADH + H(+). The catalysed reaction is a (3S)-3-hydroxyacyl-CoA = a (2E)-enoyl-CoA + H2O. It carries out the reaction a 4-saturated-(3S)-3-hydroxyacyl-CoA = a (3E)-enoyl-CoA + H2O. The enzyme catalyses (3S)-3-hydroxybutanoyl-CoA = (3R)-3-hydroxybutanoyl-CoA. It catalyses the reaction a (3Z)-enoyl-CoA = a 4-saturated (2E)-enoyl-CoA. The catalysed reaction is a (3E)-enoyl-CoA = a 4-saturated (2E)-enoyl-CoA. The protein operates within lipid metabolism; fatty acid beta-oxidation. Its function is as follows. Involved in the aerobic and anaerobic degradation of long-chain fatty acids via beta-oxidation cycle. Catalyzes the formation of 3-oxoacyl-CoA from enoyl-CoA via L-3-hydroxyacyl-CoA. It can also use D-3-hydroxyacyl-CoA and cis-3-enoyl-CoA as substrate. This is Fatty acid oxidation complex subunit alpha from Serratia proteamaculans (strain 568).